The primary structure comprises 1096 residues: Carbamoyl phosphate synthase large chain (1096 aa).

Residues 1–402 (MPKRDDINSV…ALQKALRSLE (402 aa)) are carboxyphosphate synthetic domain. The ATP site is built by Arg129, Arg169, Gly175, Gly176, Glu208, Ile210, Glu215, Gly241, Val242, His243, Gln285, and Glu299. Residues 133-328 (KDLVIESGAD…IAKIAAKLAI (196 aa)) enclose the ATP-grasp 1 domain. The Mg(2+) site is built by Gln285, Glu299, and Asn301. Positions 285, 299, and 301 each coordinate Mn(2+). The oligomerization domain stretch occupies residues 403 to 547 (KRGSSFHWGP…YSSYDSETEI (145 aa)). Residues 548 to 950 (VPSDRRKVII…AFAKSQEAAF (403 aa)) are carbamoyl phosphate synthetic domain. One can recognise an ATP-grasp 2 domain in the interval 676-870 (SGILDTAGLV…LAKAASLVMV (195 aa)). Residues Arg712, Arg754, Leu756, Glu761, Gly786, Ile787, His788, Ser789, Gln829, and Glu841 each contribute to the ATP site. Positions 829, 841, and 843 each coordinate Mg(2+). Positions 829, 841, and 843 each coordinate Mn(2+). Residues 951 to 1095 (GGLPLSGTVF…QDYAIAREAR (145 aa)) enclose the MGS-like domain. Positions 951–1096 (GGLPLSGTVF…DYAIAREARR (146 aa)) are allosteric domain.

Belongs to the CarB family. As to quaternary structure, composed of two chains; the small (or glutamine) chain promotes the hydrolysis of glutamine to ammonia, which is used by the large (or ammonia) chain to synthesize carbamoyl phosphate. Tetramer of heterodimers (alpha,beta)4. It depends on Mg(2+) as a cofactor. Mn(2+) is required as a cofactor.

The catalysed reaction is hydrogencarbonate + L-glutamine + 2 ATP + H2O = carbamoyl phosphate + L-glutamate + 2 ADP + phosphate + 2 H(+). It carries out the reaction hydrogencarbonate + NH4(+) + 2 ATP = carbamoyl phosphate + 2 ADP + phosphate + 2 H(+). It functions in the pathway amino-acid biosynthesis; L-arginine biosynthesis; carbamoyl phosphate from bicarbonate: step 1/1. Its pathway is pyrimidine metabolism; UMP biosynthesis via de novo pathway; (S)-dihydroorotate from bicarbonate: step 1/3. Its function is as follows. Large subunit of the glutamine-dependent carbamoyl phosphate synthetase (CPSase). CPSase catalyzes the formation of carbamoyl phosphate from the ammonia moiety of glutamine, carbonate, and phosphate donated by ATP, constituting the first step of 2 biosynthetic pathways, one leading to arginine and/or urea and the other to pyrimidine nucleotides. The large subunit (synthetase) binds the substrates ammonia (free or transferred from glutamine from the small subunit), hydrogencarbonate and ATP and carries out an ATP-coupled ligase reaction, activating hydrogencarbonate by forming carboxy phosphate which reacts with ammonia to form carbamoyl phosphate. The polypeptide is Carbamoyl phosphate synthase large chain (Clavibacter michiganensis subsp. michiganensis (strain NCPPB 382)).